We begin with the raw amino-acid sequence, 671 residues long: MEPIEQQLTELRTTLRHHEYLYHVMDAPEIPDAEYDRLMRELRELEAQRPDLITPDSPTQRVGAAPLTAFNQIRHEVPMLSLDNVFDEESFLAFNKRVQDRLKSTENVIWCCELKLDGLAVSILYENGVLVSAATRGDGTTGEDITSNVRTIRAIPLKLHGDNIPARLEVRGEVFLPQAGFEKINEDARRTGGKVFANPRNAAAGSLRQLDPRITAKRPLTFFCYGVGILEGGELPDTHLGRLLQFKAWGLPVSDRVTLCDSPQAVLDFYRNVEKDRPTLGFDIDGVVIKVNSLALQEQLGFVARAPRWAVAFKFPAQEQMTFVRDVEFQVGRTGAITPVARLEPVQVAGVLVSNATLHNADEIERLGLRIGDKVVIRRAGDVIPQVVNVVLSERPEETRPIVFPTHCPVCGSDVERVEGEAVTRCTGGLICGAQRKESLKHFVSRRAMDVDGMGDKIIDQLVEREYVHTPADLFRLTAGKLTGLDRMGPKSAQNVVNALEKAKATTFARFLYALGIREVGEATAAGLAAYFGTLEALQAATIDELQKVPDVGIVVATHVFNFFAEESNRDVIGQLLAEGVHWPAPVVINVQEIDSPFAGKTVVLTGSLSQMSRDDAKARLVALGAKVAGSVSKKTDLVIAGEAAGSKLAKAQELGINVIDEAEMIRLLGA.

NAD(+)-binding positions include 32-36 (DAEYD), 81-82 (SL), and glutamate 113. The N6-AMP-lysine intermediate role is filled by lysine 115. Positions 136, 173, 290, and 314 each coordinate NAD(+). Residues cysteine 408, cysteine 411, cysteine 426, and cysteine 432 each contribute to the Zn(2+) site. The BRCT domain maps to 593–671 (EIDSPFAGKT…EAEMIRLLGA (79 aa)).

This sequence belongs to the NAD-dependent DNA ligase family. LigA subfamily. Mg(2+) serves as cofactor. The cofactor is Mn(2+).

The catalysed reaction is NAD(+) + (deoxyribonucleotide)n-3'-hydroxyl + 5'-phospho-(deoxyribonucleotide)m = (deoxyribonucleotide)n+m + AMP + beta-nicotinamide D-nucleotide.. Functionally, DNA ligase that catalyzes the formation of phosphodiester linkages between 5'-phosphoryl and 3'-hydroxyl groups in double-stranded DNA using NAD as a coenzyme and as the energy source for the reaction. It is essential for DNA replication and repair of damaged DNA. In Salmonella newport (strain SL254), this protein is DNA ligase.